The following is a 376-amino-acid chain: Copper-containing nitrite reductase (376 aa).

The segment at residues 1-33 is a signal peptide (tat-type signal); sequence MSEQFQMTRRSMLAGAAIAGAVTPLIGAVSAHA. 2 Plastocyanin-like domains span residues 98–193 and 258–359; these read MTFN…IMVL and GAVG…FAVT. Positions 131, 136, 171, 172, 181, 186, and 342 each coordinate Cu cation.

It belongs to the multicopper oxidase family. In terms of assembly, homotrimer. Cu(2+) serves as cofactor. Cu(+) is required as a cofactor. It depends on FAD as a cofactor. In terms of processing, predicted to be exported by the Tat system. The position of the signal peptide cleavage has not been experimentally proven.

It localises to the periplasm. The enzyme catalyses nitric oxide + Fe(III)-[cytochrome c] + H2O = Fe(II)-[cytochrome c] + nitrite + 2 H(+). It participates in nitrogen metabolism; nitrate reduction (denitrification); dinitrogen from nitrate: step 2/4. The protein is Copper-containing nitrite reductase (nirK) of Rhizobium meliloti (strain 1021) (Ensifer meliloti).